We begin with the raw amino-acid sequence, 138 residues long: Large ribosomal subunit protein bL19 (138 aa).

This sequence belongs to the bacterial ribosomal protein bL19 family.

Functionally, this protein is located at the 30S-50S ribosomal subunit interface and may play a role in the structure and function of the aminoacyl-tRNA binding site. This is Large ribosomal subunit protein bL19 from Rickettsia peacockii (strain Rustic).